The sequence spans 236 residues: 5'-methylthioadenosine/S-adenosylhomocysteine nucleosidase (236 aa).

Glu-12 serves as the catalytic Proton acceptor. Residues Gly-78, Ile-153, and 174-175 each bind substrate; that span reads ME. The Proton donor role is filled by Asp-198.

Belongs to the PNP/UDP phosphorylase family. MtnN subfamily.

The catalysed reaction is S-adenosyl-L-homocysteine + H2O = S-(5-deoxy-D-ribos-5-yl)-L-homocysteine + adenine. The enzyme catalyses S-methyl-5'-thioadenosine + H2O = 5-(methylsulfanyl)-D-ribose + adenine. It catalyses the reaction 5'-deoxyadenosine + H2O = 5-deoxy-D-ribose + adenine. It functions in the pathway amino-acid biosynthesis; L-methionine biosynthesis via salvage pathway; S-methyl-5-thio-alpha-D-ribose 1-phosphate from S-methyl-5'-thioadenosine (hydrolase route): step 1/2. Its function is as follows. Catalyzes the irreversible cleavage of the glycosidic bond in both 5'-methylthioadenosine (MTA) and S-adenosylhomocysteine (SAH/AdoHcy) to adenine and the corresponding thioribose, 5'-methylthioribose and S-ribosylhomocysteine, respectively. Also cleaves 5'-deoxyadenosine, a toxic by-product of radical S-adenosylmethionine (SAM) enzymes, into 5-deoxyribose and adenine. The chain is 5'-methylthioadenosine/S-adenosylhomocysteine nucleosidase from Shewanella sp. (strain MR-7).